Here is a 913-residue protein sequence, read N- to C-terminus: Eukaryotic translation initiation factor 3 subunit C (913 aa).

The disordered stretch occupies residues 1–22 (MSRFFANGSDSESESSEEEVQA). A compositionally biased stretch (acidic residues) spans 11–20 (SESESSEEEV). A phosphoserine mark is found at serine 34, serine 165, serine 177, and serine 186. Positions 157–285 (FREAPDQESD…KRAEDDEDGE (129 aa)) are disordered. A compositionally biased stretch (acidic residues) spans 162–171 (DQESDVEEGE). Basic and acidic residues predominate over residues 172 to 184 (GEPHDSDGDRAGA). Positions 214–239 (DEDDSDDSIDWDSDTESETESSEDEN) are enriched in acidic residues. Positions 244–263 (MRERFLKRTTEKEDKDDDKR) are enriched in basic and acidic residues. Positions 264–276 (KDKRKEQKHKVRK) are enriched in basic residues. The PCI domain maps to 645–821 (FHMHINLELL…ETVVMHRSEP (177 aa)). The tract at residues 856 to 913 (RGNMGNRDRGYNRNQNNQGGNWGGQRRDNRNQRNRNQRGHHKQQQQQQQQQVQTIEEE) is disordered. Basic residues predominate over residues 887–898 (QRNRNQRGHHKQ).

The protein belongs to the eIF-3 subunit C family. In terms of assembly, component of the eukaryotic translation initiation factor 3 (eIF-3) complex. The eIF-3 complex interacts with pix.

The protein localises to the cytoplasm. Functionally, component of the eukaryotic translation initiation factor 3 (eIF-3) complex, which is involved in protein synthesis of a specialized repertoire of mRNAs and, together with other initiation factors, stimulates binding of mRNA and methionyl-tRNAi to the 40S ribosome. The eIF-3 complex specifically targets and initiates translation of a subset of mRNAs involved in cell proliferation. The chain is Eukaryotic translation initiation factor 3 subunit C from Drosophila mojavensis (Fruit fly).